The following is a 391-amino-acid chain: Putative ABC transporter glucose-binding protein TsgA13 (391 aa).

An N-terminal signal peptide occupies residues 1-28; it reads MLDEESSIQRRDVLSALGAAGVTTLAGC. The segment at 24-71 is disordered; it reads TLAGCTGGDTGDTDDTEASETTASEGTTSGTTTGDVETTDGGGPSEGE. The span at 42 to 59 shows a compositional bias: low complexity; it reads SETTASEGTTSGTTTGDV.

Belongs to the BMP lipoprotein family. As to quaternary structure, the complex is composed of two ATP-binding proteins (TsgD13), two transmembrane proteins (TsgB13 and TsgC13) and a solute-binding protein (TsgA13).

Functionally, part of an ABC transporter complex involved in glucose import. The protein is Putative ABC transporter glucose-binding protein TsgA13 (tsgA13) of Haloferax volcanii (strain ATCC 29605 / DSM 3757 / JCM 8879 / NBRC 14742 / NCIMB 2012 / VKM B-1768 / DS2) (Halobacterium volcanii).